Reading from the N-terminus, the 178-residue chain is Glucagon-2 (178 aa).

The N-terminal stretch at 1–21 (MFGIHSLAGVLLLVIVQSQLA) is a signal peptide. Propeptides lie at residues 83 to 87 (SGAPS), 123 to 134 (ESAEESMNGPMS), and 171 to 178 (SNKRQEDH).

Belongs to the glucagon family.

The protein resides in the secreted. In terms of biological role, promotes hydrolysis of glycogen and lipids, and raises the blood sugar level. The chain is Glucagon-2 (gcg2) from Oncorhynchus mykiss (Rainbow trout).